We begin with the raw amino-acid sequence, 1785 residues long: Plexin-2 (1785 aa).

A signal peptide spans 1 to 17 (MLPESVFLLLISHFLRA). The 427-residue stretch at 18–444 (VTQPPFETEG…MPYGIILEEL (427 aa)) folds into the Sema domain. Topologically, residues 18–1139 (VTQPPFETEG…SDHALPSRLS (1122 aa)) are extracellular. Asn66 is a glycosylation site (N-linked (GlcNAc...) asparagine). 9 disulfides stabilise this stretch: Cys84/Cys91, Cys118/Cys126, Cys247/Cys349, Cys263/Cys300, Cys318/Cys336, Cys447/Cys464, Cys453/Cys487, Cys456/Cys473, and Cys467/Cys479. N-linked (GlcNAc...) asparagine glycosylation is present at Asn249. The 43-residue stretch at 446-488 (TCSHHSSCTECLVSVDPLCQWCHPTQSCTTSARCTSPVTSQCP) folds into the PSI 1 domain. N-linked (GlcNAc...) asparagine glycosylation is found at Asn502, Asn536, and Asn572. Cys524 and Cys544 form a disulfide bridge. The region spanning 577-617 (DCSGYGTCSSCMSSEYNCAWCSGLHKCSNSCGALEKSKACV) is the PSI 2 domain. 2 N-linked (GlcNAc...) asparagine glycosylation sites follow: Asn679 and Asn702. Residues 707–748 (SCTNLASDCSSCLALSPSLSCGWCNRQCSHECHESKATAVCD) form the PSI 3 domain. IPT/TIG domains follow at residues 750 to 837 (PRID…LYSF), 840 to 924 (TSIF…PFEY), and 928 to 1040 (PSIS…LSPF). 4 N-linked (GlcNAc...) asparagine glycosylation sites follow: Asn864, Asn886, Asn984, and Asn1016. Residues 1140–1160 (LLILGLLLFIVVTLTVMCLVF) form a helical membrane-spanning segment. Positions 1159–1197 (VFKRRRQEREKEYRKIQLQMENLENNVRKECKQAFAELQ) form a coiled coil. Residues 1161–1785 (KRRRQEREKE…HIYSTISDYE (625 aa)) lie on the Cytoplasmic side of the membrane.

It belongs to the plexin family. Interacts with mab-20. As to expression, expressed predominantly in the central nervous system from embryonic to adult stages. Expressed in early embryos in ventral neuroblasts. Expressed in neurons and in a subset of posterior lateral and ventral epidermal cells following epidermal enclosure. Present in neurons, muscles and weakly expressed in epidermal cells of the larval tail.

The protein resides in the cell membrane. Its function is as follows. Involved as a receptor for mab-20/sema-2a in the formation or stabilization of cell-cell contacts at several stages of epithelial morphogenesis. In early embryonic development, required for proper ventral closure of the epidermis. During male tail morphogenesis, involved in precursor cell sorting and in the formation of distinct sensory rays. Involved in axon guidance of SDQL neurons during neurogenesis. Probably in response to stimulation by mab-20, regulates fln-1-mediated remodeling of the actin cytoskeleton and thus axon guidance and/or fasciculation of DD/VD neurons. The sequence is that of Plexin-2 from Caenorhabditis elegans.